A 180-amino-acid chain; its full sequence is DNA-directed RNA polymerase subunit Rpo7 (180 aa).

An S1 motif domain is found at 82–165 (QEVVEGEVLQ…RLPRIALTMR (84 aa)).

It belongs to the eukaryotic RPB7/RPC8 RNA polymerase subunit family. Part of the 13-subunit RNA polymerase complex. Forms a stalk with Rpo4 that extends from the main structure.

The protein localises to the cytoplasm. The enzyme catalyses RNA(n) + a ribonucleoside 5'-triphosphate = RNA(n+1) + diphosphate. Its function is as follows. DNA-dependent RNA polymerase (RNAP) catalyzes the transcription of DNA into RNA using the four ribonucleoside triphosphates as substrates. The highly mobile Rpo4/Rpo7 heterodimer is conditionally required for transcription initiation. This chain is DNA-directed RNA polymerase subunit Rpo7, found in Saccharolobus shibatae (strain ATCC 51178 / DSM 5389 / JCM 8931 / NBRC 15437 / B12) (Sulfolobus shibatae).